The chain runs to 1859 residues: Retinitis pigmentosa 1-like 1 protein (1859 aa).

Disordered stretches follow at residues 1–22 (MNSTPGDTRDAPAPSHPAPSHR) and 115–154 (RKPPKTSREPGRLQRKSPSAGQAQVFQGGHEAPETSYSWK). One can recognise a Doublecortin 1 domain in the interval 42 to 126 (KKITFLKRGD…PPKTSREPGR (85 aa)). A compositionally biased stretch (basic and acidic residues) spans 115–126 (RKPPKTSREPGR). The segment covering 130-139 (KSPSAGQAQV) has biased composition (polar residues). Residues 160-239 (RRLTLVKNGD…NEAFRCLEME (80 aa)) form the Doublecortin 2 domain. Disordered regions lie at residues 263–301 (PNAKQSVIHSRGRSGGKLRQVSLTSERSGLSDHPASGHR), 426–445 (IWRNPLATPEGTGPTPRRRW), 457–593 (WRQE…TQSH), 700–750 (MPQE…TSKA), 868–920 (CFGR…TPSA), 952–997 (NTEV…GVLS), 1152–1211 (TEDF…YPEL), 1227–1255 (ATGGEETGKGGRKQTWGNAPEQSVHSTML), 1298–1350 (GSQD…RVRE), and 1567–1859 (LQSK…DLDF). Over residues 457 to 472 (WRQEANHRKGHDKDNL) the composition is skewed to basic and acidic residues. 2 stretches are compositionally biased toward polar residues: residues 499–512 (GSDTLHPVSSASSH) and 535–551 (PETQSTERALSDTSVSA). A compositionally biased stretch (low complexity) spans 716–728 (SPSNSPSAGNQAS). Positions 734–750 (PFSSSLDLQEPQATSKA) are enriched in polar residues. Positions 870–883 (GRESASNGSTSSGH) are enriched in low complexity. Composition is skewed to polar residues over residues 1241–1252 (TWGNAPEQSVHS), 1336–1345 (ESPQHFSESN), and 1567–1577 (LQSKKGGSSNR). Positions 1616–1632 (GEGKQRLRAEEDPEILK) are enriched in basic and acidic residues. A compositionally biased stretch (acidic residues) spans 1641–1652 (PEEDEATEEDGE). A compositionally biased stretch (basic and acidic residues) spans 1700 to 1720 (EASRERQQEVEGRHQDVKEDS). Positions 1756-1778 (SHHTACSSRALSLDNSSQVSQKG) are enriched in polar residues.

Interacts with RP1; has a synergistic effect with RP1 in photoreceptor differentiation. In terms of tissue distribution, retinal-specific; expressed in photoreceptor.

The protein resides in the cytoplasm. It is found in the cytoskeleton. The protein localises to the cilium axoneme. Its subcellular location is the cell projection. It localises to the cilium. The protein resides in the photoreceptor outer segment. In terms of biological role, required for the differentiation of photoreceptor cells. Plays a role in the organization of outer segment of rod and cone photoreceptors. The chain is Retinitis pigmentosa 1-like 1 protein (Rp1l1) from Mus musculus (Mouse).